Reading from the N-terminus, the 302-residue chain is Putative gluconeogenesis factor (302 aa).

Belongs to the gluconeogenesis factor family.

Its subcellular location is the cytoplasm. Required for morphogenesis under gluconeogenic growth conditions. The protein is Putative gluconeogenesis factor (ybhK) of Salmonella typhimurium (strain LT2 / SGSC1412 / ATCC 700720).